Reading from the N-terminus, the 858-residue chain is NEDD4-binding protein 1 (858 aa).

A disordered region spans residues 17 to 37 (TCTEPPGGRQSPTASRAQPDS). The span at 26–37 (QSPTASRAQPDS) shows a compositional bias: polar residues. The 85-residue stretch at 96–180 (KEDVYKAKEY…VQQFVALFQE (85 aa)) folds into the KH-like domain. Disordered regions lie at residues 262 to 321 (EDKT…TWTV) and 388 to 424 (QKTQ…KEKE). The span at 285–316 (RSSESEQRDTKRQYSLERREEEQCEEREREPT) shows a compositional bias: basic and acidic residues. A compositionally biased stretch (polar residues) spans 389–418 (KTQSTQGAQRTSRTPDPSPCANASSTSTSN). The RNase NYN domain maps to 598-750 (LRHIIIDGSN…LGKHGPHLDE (153 aa)). Residues 774-784 (SVYSQAAQSTA) are compositionally biased toward polar residues. The interval 774–823 (SVYSQAAQSTAHPSSPSHWPHSGPPDWHLPRPSPSPPPQRSPSETTELKR) is disordered. Residues 785–799 (HPSSPSHWPHSGPPD) are compositionally biased toward low complexity. Residues 804 to 813 (RPSPSPPPQR) show a composition bias toward pro residues. The tract at residues 813 to 858 (RSPSETTELKRKLYDIFPDQKQRIDRILSDNPYMRDLNALSGLLLG) is coCUN.

It belongs to the N4BP1 family.

It is found in the nucleus. The protein resides in the nucleolus. Its subcellular location is the PML body. Potent suppressor of cytokine production that acts as a regulator of innate immune signaling and inflammation. Acts as a key negative regulator of select cytokine and chemokine responses elicited by TRIF-independent Toll-like receptors (TLRs), thereby limiting inflammatory cytokine responses to minor insults. Has ribonuclease activity. The chain is NEDD4-binding protein 1 from Danio rerio (Zebrafish).